The sequence spans 233 residues: 5'-methylthioadenosine/S-adenosylhomocysteine nucleosidase (233 aa).

E12 functions as the Proton acceptor in the catalytic mechanism. Substrate-binding positions include G78, I156, and 177–178 (ME). D201 functions as the Proton donor in the catalytic mechanism.

It belongs to the PNP/UDP phosphorylase family. MtnN subfamily.

The catalysed reaction is S-adenosyl-L-homocysteine + H2O = S-(5-deoxy-D-ribos-5-yl)-L-homocysteine + adenine. The enzyme catalyses S-methyl-5'-thioadenosine + H2O = 5-(methylsulfanyl)-D-ribose + adenine. It carries out the reaction 5'-deoxyadenosine + H2O = 5-deoxy-D-ribose + adenine. It functions in the pathway amino-acid biosynthesis; L-methionine biosynthesis via salvage pathway; S-methyl-5-thio-alpha-D-ribose 1-phosphate from S-methyl-5'-thioadenosine (hydrolase route): step 1/2. Its function is as follows. Catalyzes the irreversible cleavage of the glycosidic bond in both 5'-methylthioadenosine (MTA) and S-adenosylhomocysteine (SAH/AdoHcy) to adenine and the corresponding thioribose, 5'-methylthioribose and S-ribosylhomocysteine, respectively. Also cleaves 5'-deoxyadenosine, a toxic by-product of radical S-adenosylmethionine (SAM) enzymes, into 5-deoxyribose and adenine. The sequence is that of 5'-methylthioadenosine/S-adenosylhomocysteine nucleosidase from Listeria monocytogenes serotype 4b (strain CLIP80459).